Consider the following 216-residue polypeptide: Pyridoxine/pyridoxamine 5'-phosphate oxidase (216 aa).

FMN is bound by residues 64–69 (RVVLLK), 79–80 (FT), K85, K86, and Q108. K69 provides a ligand contact to substrate. 3 residues coordinate substrate: Y126, R130, and S134. Residues 143–144 (QS) and W188 contribute to the FMN site. 194–196 (RKH) serves as a coordination point for substrate. R198 contributes to the FMN binding site.

This sequence belongs to the pyridoxamine 5'-phosphate oxidase family. As to quaternary structure, homodimer. FMN is required as a cofactor.

It catalyses the reaction pyridoxamine 5'-phosphate + O2 + H2O = pyridoxal 5'-phosphate + H2O2 + NH4(+). The catalysed reaction is pyridoxine 5'-phosphate + O2 = pyridoxal 5'-phosphate + H2O2. Its pathway is cofactor metabolism; pyridoxal 5'-phosphate salvage; pyridoxal 5'-phosphate from pyridoxamine 5'-phosphate: step 1/1. The protein operates within cofactor metabolism; pyridoxal 5'-phosphate salvage; pyridoxal 5'-phosphate from pyridoxine 5'-phosphate: step 1/1. Catalyzes the oxidation of either pyridoxine 5'-phosphate (PNP) or pyridoxamine 5'-phosphate (PMP) into pyridoxal 5'-phosphate (PLP). This chain is Pyridoxine/pyridoxamine 5'-phosphate oxidase, found in Wolbachia pipientis wMel.